The following is a 276-amino-acid chain: Release factor glutamine methyltransferase (276 aa).

S-adenosyl-L-methionine contacts are provided by residues 117–121 (GTGTG), aspartate 140, tryptophan 168, and asparagine 182. Substrate is bound at residue 182–185 (NPPY).

It belongs to the protein N5-glutamine methyltransferase family. PrmC subfamily.

It catalyses the reaction L-glutaminyl-[peptide chain release factor] + S-adenosyl-L-methionine = N(5)-methyl-L-glutaminyl-[peptide chain release factor] + S-adenosyl-L-homocysteine + H(+). Its function is as follows. Methylates the class 1 translation termination release factors RF1/PrfA and RF2/PrfB on the glutamine residue of the universally conserved GGQ motif. The polypeptide is Release factor glutamine methyltransferase (Yersinia pestis).